The primary structure comprises 322 residues: 4-hydroxythreonine-4-phosphate dehydrogenase (322 aa).

Substrate is bound by residues His-131 and Thr-132. A divalent metal cation contacts are provided by His-161, His-206, and His-259. Residues Lys-267, Asn-276, and Arg-285 each contribute to the substrate site.

The protein belongs to the PdxA family. As to quaternary structure, homodimer. It depends on a divalent metal cation as a cofactor.

The protein localises to the cytoplasm. It carries out the reaction 4-(phosphooxy)-L-threonine + NAD(+) = 3-amino-2-oxopropyl phosphate + CO2 + NADH. It participates in cofactor biosynthesis; pyridoxine 5'-phosphate biosynthesis; pyridoxine 5'-phosphate from D-erythrose 4-phosphate: step 4/5. In terms of biological role, catalyzes the NAD(P)-dependent oxidation of 4-(phosphooxy)-L-threonine (HTP) into 2-amino-3-oxo-4-(phosphooxy)butyric acid which spontaneously decarboxylates to form 3-amino-2-oxopropyl phosphate (AHAP). The chain is 4-hydroxythreonine-4-phosphate dehydrogenase from Sulfurihydrogenibium sp. (strain YO3AOP1).